A 1238-amino-acid chain; its full sequence is Topoisomerase 1-associated factor 1 (1238 aa).

Residues Ser-626 and Ser-654 each carry the phosphoserine modification. The interval 1008–1051 (GIARSKKKDKRKRRKGEAKTNLPMFGDQDDERPQTVRERHGVFS) is disordered. Positions 1010 to 1023 (ARSKKKDKRKRRKG) are enriched in basic residues. Positions 1038–1050 (ERPQTVRERHGVF) are enriched in basic and acidic residues. A phosphoserine mark is found at Ser-1056 and Ser-1058. The segment at 1159–1218 (NNNNNQLSDDDVNSESRNSLGSSQPSNSQNMFQSEVYSRKESTKRSLEASAADESDEDEE) is disordered. Polar residues predominate over residues 1173 to 1194 (ESRNSLGSSQPSNSQNMFQSEV). Residues 1195–1205 (YSRKESTKRSL) show a composition bias toward basic and acidic residues. Over residues 1209-1218 (AADESDEDEE) the composition is skewed to acidic residues. Ser-1213 is modified (phosphoserine).

This sequence belongs to the timeless family. Component of the fork protection complex (FPC) consisting of TOF1 and CSM3. Interacts with WSS1 and ESC4.

It is found in the nucleus. In terms of biological role, forms a fork protection complex (FPC) with CSM3 and which is required for chromosome segregation during meiosis and DNA damage repair. FPC coordinates leading and lagging strand synthesis and moves with the replication fork. FPC stabilizes replication forks in a configuration that is recognized by replication checkpoint sensors and protects stalled replication forks against the fork-releasing activity of RRM3 helicase. The chain is Topoisomerase 1-associated factor 1 (TOF1) from Saccharomyces cerevisiae (strain ATCC 204508 / S288c) (Baker's yeast).